The following is a 266-amino-acid chain: 22 kDa alpha-zein 8 (266 aa).

The signal sequence occupies residues 1 to 21; the sequence is MATKILALLALLALFVSATNA.

This sequence belongs to the zein family.

Functionally, zeins are major seed storage proteins. The polypeptide is 22 kDa alpha-zein 8 (Zea mays (Maize)).